Here is a 318-residue protein sequence, read N- to C-terminus: NADH-ubiquinone oxidoreductase chain 1 (318 aa).

The next 9 helical transmembrane spans lie at 2–22, 36–56, 69–89, 100–120, 130–152, 171–191, 217–237, 254–273, and 294–314; these read FLTN…FLTL, GPNI…IKLF, LLFT…WIPL, LGML…LWSG, IGAL…ILLH, HIWL…STLA, AGPF…MNAL, LYST…FLWI, and LPLT…LTSI.

It belongs to the complex I subunit 1 family.

It localises to the mitochondrion inner membrane. It catalyses the reaction a ubiquinone + NADH + 5 H(+)(in) = a ubiquinol + NAD(+) + 4 H(+)(out). In terms of biological role, core subunit of the mitochondrial membrane respiratory chain NADH dehydrogenase (Complex I) that is believed to belong to the minimal assembly required for catalysis. Complex I functions in the transfer of electrons from NADH to the respiratory chain. The immediate electron acceptor for the enzyme is believed to be ubiquinone. This chain is NADH-ubiquinone oxidoreductase chain 1 (MT-ND1), found in Cyclopes didactylus (Silky anteater).